Reading from the N-terminus, the 516-residue chain is MTEPNRAQAAPASPTAELPAADENKIIAERREKLAALRRQGVAFPNDFRPTHQAAALHEQYGETDQPALEATPVEVAIAGRMMLKRVMGKASFATVQDGSGQIQFYITRDKVGEDVYAAFKHWDLGDIISARGVLFRTNKGELSVQVQELRLLSKSLRPLPDKFHGLADQEMKYRQRYVDLIVSPETRNTFRARTKAMSSLRRHMSDAGFMEVETPMLHPIPGGAAAKPFITHHNALDMQMFMRIAPELYLKRLIVGGFERVFEINRNFRNEGVSPRHNPEFTMMEFYAAYTDYRWLMDFTENLIRQAAIDASGTAVLTYQGRELDLSKPFHRLTICQAIQKFAPQYTDAQLADADFLRTELKKFGVNTSAPQFLNAGIGTLQLVLFEETAESQLWEPTFIVDYPVEVSPLARASDTVPGITERFELFITGREIANGFSELNDAEDQADRFRKQVEQKDAGDEEAMYYDADYIRALEYGMPPTGGCGIGIDRLVMLLTDSPNIRDVILFPHLRRED.

Residues 1 to 23 (MTEPNRAQAAPASPTAELPAADE) form a disordered region. Mg(2+)-binding residues include Glu-426 and Glu-433.

The protein belongs to the class-II aminoacyl-tRNA synthetase family. Homodimer. Mg(2+) is required as a cofactor.

The protein localises to the cytoplasm. The enzyme catalyses tRNA(Lys) + L-lysine + ATP = L-lysyl-tRNA(Lys) + AMP + diphosphate. The protein is Lysine--tRNA ligase of Cupriavidus pinatubonensis (strain JMP 134 / LMG 1197) (Cupriavidus necator (strain JMP 134)).